The chain runs to 58 residues: Conotoxin Leo-T2 (58 aa).

Residues 1-22 form the signal peptide; it reads MRCLPVFIILPLLIPSAPSVDA. Positions 23-47 are excised as a propeptide; it reads QPMTEDDVPLASFHEQTLQELWNKR.

It belongs to the conotoxin T superfamily. Contains 2 disulfide bonds that can be either 'C1-C3, C2-C4' or 'C1-C4, C2-C3', since these disulfide connectivities have been observed for conotoxins with cysteine framework V (for examples, see AC P0DQQ7 and AC P81755). Expressed by the venom duct.

The protein localises to the secreted. In Conus leopardus (Leopard cone), this protein is Conotoxin Leo-T2.